The following is a 312-amino-acid chain: MQGEIIAGFLAPHPPHLVYGENPPQNEPRSQGGWEVLRWAYERARERLDAMKPDVLLVHSPHWITSVGHHFLGVPELSGKSVDPIFPNVFRYDFSLNVDVELAEACAEEGRKAGLVTKMMRNPKFRVDYGTITTLHLIRPQWDIPVVGISANNSPYYLNTKEGMSEMDVLGKATREAIRKTGRKAVLLASNTLSHWHFHEEPTIPEDMSKEYPATMAGYQWDIRMIELMRQGKTSEVFKLLPQFIDEAFAEVKSGAFTWMHAAMQYPELAAELFGYGTVIGTGNAVMEWDLRKAGLSMLGAADQKQRSAAVA.

Positions 13, 62, and 251 each coordinate Fe cation.

It belongs to the LigB/MhpB extradiol dioxygenase family. The APD complex is a heterotetramer of 2 alpha (CnbCa) and 2 beta (CnbCb) subunits. The cofactor is Fe(2+).

It carries out the reaction 2-aminophenol + O2 = 2-aminomuconate 6-semialdehyde. The catalysed reaction is 2-amino-5-chlorophenol + O2 = 2-amino-5-chloromuconate 6-semialdehyde. The protein operates within xenobiotic degradation; nitrobenzene degradation. Its pathway is xenobiotic degradation; 4-chloronitrobenzene degradation. With respect to regulation, complete loss of activity in the presence of Ni(2+), Co(2+), Cd(2+), Zn(2+) and hydrogen peroxide, however activity with hydrogen peroxide partially restored upon addition of excess ascorbate. Partially inhibited by Fe(2+), Mg(2+), Ca(2+), Mn(2+), Cu(2+) and also by EDTA, at 2 mM concentration. Total activity inhibited in the presence of catechol or 4-nitrocatechol but completely restored after removal of catechol and addition of 2 mM Fe(2+) and 5 mM ascorbate. Its function is as follows. Component of the 2-aminophenol 1,6-dioxygenase (APD) complex that catalyzes the ring fission of 2-aminophenol to produce 2-aminomuconic semialdehyde. CnbCb seems to be the catalytic subunit of the complex. Also active on other substrates such as 2-amino-5-chlorophenol (68% activity), protocatechuate (33% activity) and catechol (5% activity). Both 2-aminophenol and 2-amino-5-cholorophenol are likely native substrates for this dioxygenase which is involved in the reductive degradation pathway of both nitrobenzene (NB) and 4-chloronitrobenzene (4-CNB), allowing C.testosteroni strain CNB-1 to grow on these compounds as sole source of carbon, nitrogen, and energy. In Comamonas testosteroni (Pseudomonas testosteroni), this protein is 2-aminophenol 1,6-dioxygenase subunit beta.